The primary structure comprises 151 residues: MNFPQDGIKLHRGNFTAIGRQIQPYLEDGKCFRMVLKPWRERRSLSQNALSHMWYSEISEYLISKGKTFATPAWVKDALKHTYLGYETKDLVDVVTGDITTIQSLRHTSDLDTGEMYVFLCKVEAWAMNIGCHLTIPQSCEFQLLRDKQEA.

The protein to E.coli ybcN.

This is an uncharacterized protein from Escherichia coli (Bacteriophage 82).